Here is a 541-residue protein sequence, read N- to C-terminus: Acyl-CoA ligase M9 (541 aa).

186–197 (AMSTSGTTGLPK) contacts AMP. An AMP-binding region spans residues 445–519 (ELEAVLHQMP…DSLPRNSSGK (75 aa)).

Belongs to the ATP-dependent AMP-binding enzyme family.

The protein operates within secondary metabolite biosynthesis. Its function is as follows. Acyl-CoA ligase; part of the gene cluster that mediates the biosynthesis of squalestatin S1 (SQS1, also known as zaragozic acid A), a heavily oxidized fungal polyketide that offers potent cholesterol lowering activity by targeting squalene synthase (SS). SQS1 is composed of a 2,8-dioxobicyclic[3.2.1]octane-3,4,5-tricarboxyclic acid core that is connected to two lipophilic polyketide arms. These initial steps feature the priming of an unusual benzoic acid starter unit onto the highly reducing polyketide synthase pks2, followed by oxaloacetate extension and product release to generate a tricarboxylic acid containing product. The phenylalanine ammonia lyase (PAL) M7 and the acyl-CoA ligase M9 are involved in transforming phenylalanine into benzoyl-CoA. The citrate synthase-like protein R3 is involved in connecting the C-alpha-carbons of the hexaketide chain and oxaloacetate to afford the tricarboxylic acid unit. The potential hydrolytic enzymes, M8 and M10, are in close proximity to pks2 and may participate in product release. On the other side, the tetraketide arm is synthesized by a the squalestatin tetraketide synthase pks1 and enzymatically esterified to the core in the last biosynthetic step, by the acetyltransferase M4. The biosynthesis of the tetraketide must involve 3 rounds of chain extension. After the first and second rounds methyl-transfer occurs, and in all rounds of extension the ketoreductase and dehydratase are active. The enoyl reductase and C-MeT of pks1 are not active in the final round of extension. The acetyltransferase M4 appears to have a broad substrate selectivity for its acyl CoA substrate, allowing the in vitro synthesis of novel squalestatins. The biosynthesis of SQS1 requires several oxidative steps likely performed by oxidoreductases M1, R1 and R2. Finally, in support of the identification of the cluster as being responsible for SQS1 production, the cluster contains a gene encoding a putative squalene synthase (SS) R6, suggesting a likely mechanism for self-resistance. This is Acyl-CoA ligase M9 from Phoma sp. (strain ATCC 20986 / MF5453).